The chain runs to 178 residues: Large ribosomal subunit protein uL5 (178 aa).

The protein belongs to the universal ribosomal protein uL5 family. As to quaternary structure, part of the 50S ribosomal subunit; part of the 5S rRNA/L5/L18/L25 subcomplex. Contacts the 5S rRNA and the P site tRNA. Forms a bridge to the 30S subunit in the 70S ribosome.

Functionally, this is one of the proteins that bind and probably mediate the attachment of the 5S RNA into the large ribosomal subunit, where it forms part of the central protuberance. In the 70S ribosome it contacts protein S13 of the 30S subunit (bridge B1b), connecting the 2 subunits; this bridge is implicated in subunit movement. Contacts the P site tRNA; the 5S rRNA and some of its associated proteins might help stabilize positioning of ribosome-bound tRNAs. In Psychrobacter arcticus (strain DSM 17307 / VKM B-2377 / 273-4), this protein is Large ribosomal subunit protein uL5.